We begin with the raw amino-acid sequence, 86 residues long: Anti-adapter protein IraP (86 aa).

Residues 1 to 36 (MKNLIAELLFKLAQKEEESKELCAQVEALEIIVTAM) adopt a coiled-coil conformation.

The protein belongs to the IraP family. In terms of assembly, interacts with RssB.

The protein resides in the cytoplasm. Functionally, inhibits RpoS proteolysis by regulating RssB activity, thereby increasing the stability of the sigma stress factor RpoS especially during phosphate starvation, but also in stationary phase and during nitrogen starvation. Its effect on RpoS stability is due to its interaction with RssB, which probably blocks the interaction of RssB with RpoS, and the consequent delivery of the RssB-RpoS complex to the ClpXP protein degradation pathway. The polypeptide is Anti-adapter protein IraP (Escherichia coli O127:H6 (strain E2348/69 / EPEC)).